The primary structure comprises 869 residues: Phosphatidylethanolamine N-methyltransferase (869 aa).

Serine 2 carries the post-translational modification N-acetylserine. Residues 2-55 (SSCKTTLSEMVGSVTKDRGTINVEARTRSSNVTFKPPVTHDMVRSLFDPTLKKS) are Lumenal-facing. The helical transmembrane segment at 56-76 (LLEKCIALAIISNFFICYWVF) threads the bilayer. At 77-86 (QRFGLQFTKY) the chain is on the cytoplasmic side. The helical transmembrane segment at 87 to 107 (FFLVQYLFWRIAYNLGIGLVL) threads the bilayer. At 108-187 (HYQSHYETLT…EINVWLIFRQ (80 aa)) the chain is on the lumenal side. Residues 188-208 (FVDLILMQDFVTYIIYVYLSI) form a helical membrane-spanning segment. Over 209–212 (PYSW) the chain is Cytoplasmic. A helical membrane pass occupies residues 213 to 233 (VQIFNWRSLLGVILILFNIWV). Topologically, residues 234-258 (KLDAHRVVKDYAWYWGDFFFLEESE) are lumenal. Residues 259 to 279 (LIFDGVFNISPHPMYSIGYLG) traverse the membrane as a helical segment. Residues 280 to 291 (YYGLSLICNDYK) are Cytoplasmic-facing. The chain crosses the membrane as a helical span at residues 292-310 (VLLVSVFGHYSQFLFLKYV). Topologically, residues 311 to 362 (ENPHIERTYGDGTDSDSQMNSRIDDLISKENYDYSRPLINMGLSFNNFNKLR) are lumenal. Residues 363–383 (FTDYFTIGTVAALMLGTIMNA) traverse the membrane as a helical segment. At 384 to 389 (RFINLN) the chain is on the cytoplasmic side. A helical membrane pass occupies residues 390–410 (YLFITVFVTKLVSWLFISTIL). The Lumenal segment spans residues 411-439 (YKQSQSKWFTRLFLENGYTQVYSYEQWQF). The helical transmembrane segment at 440 to 460 (IYNYYLVLTYTLMIIHTGLQI) threads the bilayer. Over 461 to 463 (WSN) the chain is Cytoplasmic. The helical transmembrane segment at 464-484 (FSNINNSQLIFGLILVALQTW) threads the bilayer. Residues 485-534 (CDKETRLAISDFGWFYGDFFLSNYISTRKLTSQGIYRYLNHPEAVLGVVG) lie on the Lumenal side of the membrane. Residues 535–555 (VWGTVLMTNFAVTNIILAVLW) traverse the membrane as a helical segment. Over 556 to 869 (TLTNFILVKF…DIKQTLDSLA (314 aa)) the chain is Cytoplasmic.

Belongs to the class VI-like SAM-binding methyltransferase superfamily. CHO2 family.

It localises to the endoplasmic reticulum membrane. The enzyme catalyses a 1,2-diacyl-sn-glycero-3-phosphoethanolamine + S-adenosyl-L-methionine = a 1,2-diacyl-sn-glycero-3-phospho-N-methylethanolamine + S-adenosyl-L-homocysteine + H(+). It participates in phospholipid metabolism; phosphatidylcholine biosynthesis. Functionally, catalyzes the first step of the methylation pathway of phosphatidylcholine biosynthesis, the SAM-dependent methylation of phosphatidylethanolamine (PE) to phosphatidylmonomethylethanolamine (PMME). Preferentially converts di-C16:1 substrates. This Saccharomyces cerevisiae (strain ATCC 204508 / S288c) (Baker's yeast) protein is Phosphatidylethanolamine N-methyltransferase.